The primary structure comprises 128 residues: Con-Ins F2c (128 aa).

The N-terminal stretch at 1–24 is a signal peptide; that stretch reads MTTSSYFLLVALGLLLYVCRSSFG. 4 disulfide bridges follow: C29-C104, C41-C107, C53-C120, and C106-C111. A propeptide spans 59-89 (c peptide); that stretch reads LQGGTGKKRGRASLLRKRRAFLSMLKARAKR. The residue at position 115 (E115) is a 4-carboxyglutamate; partial. S127 is subject to Serine amide.

The protein belongs to the insulin family. In terms of assembly, heterodimer of A and B chains; disulfide-linked. Expressed by the venom gland.

The protein resides in the secreted. Its function is as follows. This venom insulin facilitates prey capture by rapidly inducing hypoglycemic shock. Intraperitoneal injection of this peptide into zebrafish lowers blood glucose with the same potency than human insulin. In vivo, when applied to water, this peptide reduces overall locomotor activity of zebrafish larvae, observed as a significant decrease in the percentage of time spent swimming and movement frequency. This is Con-Ins F2c from Conus floridulus (Cone snail).